We begin with the raw amino-acid sequence, 208 residues long: Large ribosomal subunit protein uL4 (208 aa).

The interval Q44–N79 is disordered.

Belongs to the universal ribosomal protein uL4 family. As to quaternary structure, part of the 50S ribosomal subunit.

One of the primary rRNA binding proteins, this protein initially binds near the 5'-end of the 23S rRNA. It is important during the early stages of 50S assembly. It makes multiple contacts with different domains of the 23S rRNA in the assembled 50S subunit and ribosome. Functionally, forms part of the polypeptide exit tunnel. The protein is Large ribosomal subunit protein uL4 of Bacteroides thetaiotaomicron (strain ATCC 29148 / DSM 2079 / JCM 5827 / CCUG 10774 / NCTC 10582 / VPI-5482 / E50).